The primary structure comprises 146 residues: UPF0306 protein HD_1359 (146 aa).

Belongs to the UPF0306 family.

This chain is UPF0306 protein HD_1359, found in Haemophilus ducreyi (strain 35000HP / ATCC 700724).